A 37-amino-acid polypeptide reads, in one-letter code: Cytochrome b6-f complex subunit 5 (37 aa).

Residues 5 to 25 form a helical membrane-spanning segment; that stretch reads LLCGIVLGLVPVTIAGLFVTA.

This sequence belongs to the PetG family. As to quaternary structure, the 4 large subunits of the cytochrome b6-f complex are cytochrome b6, subunit IV (17 kDa polypeptide, PetD), cytochrome f and the Rieske protein, while the 4 small subunits are PetG, PetL, PetM and PetN. The complex functions as a dimer.

The protein localises to the plastid. It localises to the chloroplast thylakoid membrane. Component of the cytochrome b6-f complex, which mediates electron transfer between photosystem II (PSII) and photosystem I (PSI), cyclic electron flow around PSI, and state transitions. PetG is required for either the stability or assembly of the cytochrome b6-f complex. The protein is Cytochrome b6-f complex subunit 5 of Chlamydomonas reinhardtii (Chlamydomonas smithii).